The sequence spans 677 residues: Methionine--tRNA ligase (677 aa).

A 'HIGH' region motif is present at residues 15–25 (PYANGSIHLGH). Cys-146, Cys-149, Cys-159, and Cys-162 together coordinate Zn(2+). Residues 333–337 (KMSKS) carry the 'KMSKS' region motif. Residue Lys-336 participates in ATP binding. Positions 575-677 (DFAKVDLRVA…AGAKPGHQVK (103 aa)) constitute a tRNA-binding domain.

It belongs to the class-I aminoacyl-tRNA synthetase family. MetG type 1 subfamily. As to quaternary structure, homodimer. Requires Zn(2+) as cofactor.

The protein localises to the cytoplasm. The catalysed reaction is tRNA(Met) + L-methionine + ATP = L-methionyl-tRNA(Met) + AMP + diphosphate. In terms of biological role, is required not only for elongation of protein synthesis but also for the initiation of all mRNA translation through initiator tRNA(fMet) aminoacylation. This is Methionine--tRNA ligase from Escherichia coli O6:K15:H31 (strain 536 / UPEC).